The primary structure comprises 182 residues: ATP-dependent protease subunit HslV (182 aa).

T2 is a catalytic residue. Residues G157, C160, and T163 each contribute to the Na(+) site.

Belongs to the peptidase T1B family. HslV subfamily. As to quaternary structure, a double ring-shaped homohexamer of HslV is capped on each side by a ring-shaped HslU homohexamer. The assembly of the HslU/HslV complex is dependent on binding of ATP.

It localises to the cytoplasm. It catalyses the reaction ATP-dependent cleavage of peptide bonds with broad specificity.. Its activity is regulated as follows. Allosterically activated by HslU binding. In terms of biological role, protease subunit of a proteasome-like degradation complex believed to be a general protein degrading machinery. This chain is ATP-dependent protease subunit HslV, found in Vibrio atlanticus (strain LGP32) (Vibrio splendidus (strain Mel32)).